Reading from the N-terminus, the 96-residue chain is Probable quinol oxidase subunit 4 (96 aa).

The next 3 helical transmembrane spans lie at 8–28 (TVGFIASIVLTLLAVFVTLYT), 36–56 (VTIIFGFAFIQAALQLLMFMH), and 68–88 (FKVIFAIIITLVTVIGTYWVM).

It belongs to the cytochrome c oxidase bacterial subunit 4 family.

It localises to the cell membrane. The catalysed reaction is 2 a quinol + O2 = 2 a quinone + 2 H2O. In terms of biological role, catalyzes quinol oxidation with the concomitant reduction of oxygen to water. This chain is Probable quinol oxidase subunit 4 (qoxD), found in Staphylococcus epidermidis (strain ATCC 35984 / DSM 28319 / BCRC 17069 / CCUG 31568 / BM 3577 / RP62A).